The following is a 62-amino-acid chain: ATP synthase subunit epsilon, mitochondrial (62 aa).

Thr-52 carries the phosphothreonine modification.

Belongs to the eukaryotic ATPase epsilon family. As to quaternary structure, F-type ATPases have 2 components, CF(1) - the catalytic core - and CF(0) - the membrane proton channel. CF(1) has five subunits: alpha(3), beta(3), gamma(1), delta(1), epsilon(1). CF(0) has three main subunits: a, b and c.

It localises to the mitochondrion. Its subcellular location is the mitochondrion inner membrane. Functionally, mitochondrial membrane ATP synthase (F(1)F(0) ATP synthase or Complex V) produces ATP from ADP in the presence of a proton gradient across the membrane which is generated by electron transport complexes of the respiratory chain. F-type ATPases consist of two structural domains, F(1) - containing the extramembraneous catalytic core, and F(0) - containing the membrane proton channel, linked together by a central stalk and a peripheral stalk. During catalysis, ATP synthesis in the catalytic domain of F(1) is coupled via a rotary mechanism of the central stalk subunits to proton translocation. Part of the complex F(1) domain and of the central stalk which is part of the complex rotary element. Rotation of the central stalk against the surrounding alpha(3)beta(3) subunits leads to hydrolysis of ATP in three separate catalytic sites on the beta subunits. The polypeptide is ATP synthase subunit epsilon, mitochondrial (ATP15) (Saccharomyces cerevisiae (strain ATCC 204508 / S288c) (Baker's yeast)).